The following is a 134-amino-acid chain: Protein NrdI (134 aa).

Belongs to the NrdI family.

Functionally, probably involved in ribonucleotide reductase function. In Yersinia enterocolitica serotype O:8 / biotype 1B (strain NCTC 13174 / 8081), this protein is Protein NrdI.